We begin with the raw amino-acid sequence, 75 residues long: uncharacterized protein (75 aa).

A helical membrane pass occupies residues 49–69 (VDIVAVATTLPFIVAVICIVF).

It localises to the host membrane. This is an uncharacterized protein from Saccharolobus islandicus (Sulfolobus islandicus).